The primary structure comprises 217 residues: Probable transaldolase (217 aa).

The active-site Schiff-base intermediate with substrate is Lys83.

The protein belongs to the transaldolase family. Type 3B subfamily.

Its subcellular location is the cytoplasm. It catalyses the reaction D-sedoheptulose 7-phosphate + D-glyceraldehyde 3-phosphate = D-erythrose 4-phosphate + beta-D-fructose 6-phosphate. It participates in carbohydrate degradation; pentose phosphate pathway; D-glyceraldehyde 3-phosphate and beta-D-fructose 6-phosphate from D-ribose 5-phosphate and D-xylulose 5-phosphate (non-oxidative stage): step 2/3. In terms of biological role, transaldolase is important for the balance of metabolites in the pentose-phosphate pathway. In Bartonella tribocorum (strain CIP 105476 / IBS 506), this protein is Probable transaldolase.